We begin with the raw amino-acid sequence, 419 residues long: DNA ligase (419 aa).

The tract at residues 1–120 (MLNHFPGHCS…ARQKRGAHTN (120 aa)) is NTD. The tract at residues 121–317 (TGMIPPMLVK…NYHSAHLAKL (197 aa)) is AD domain. Lys-151 acts as the N6-AMP-lysine intermediate in catalysis. The tract at residues 318–419 (KPLLDAEFIL…REPINVLEII (102 aa)) is OB domain.

The protein belongs to the ATP-dependent DNA ligase family.

Its subcellular location is the virion. The enzyme catalyses ATP + (deoxyribonucleotide)n-3'-hydroxyl + 5'-phospho-(deoxyribonucleotide)m = (deoxyribonucleotide)n+m + AMP + diphosphate.. In terms of biological role, very low-fidelity DNA ligase that seals nicks in double-stranded DNA during DNA repair. Together with the viral repair DNA polymerase X, fills the single nucleotide gaps generated by the AP endonuclease. It is not essential for viral replication and recombination. Displays a very low adenylation activity towards DNA with 3'-dideoxy- or 3'-amino-terminated nicks compared to regular nick DNA. The polypeptide is DNA ligase (Ornithodoros (relapsing fever ticks)).